We begin with the raw amino-acid sequence, 227 residues long: Glial cell line-derived neurotrophic factor (227 aa).

The signal sequence occupies residues 1–19 (MKLWAILAVCILLLSSVSS). The propeptide occupies 20-93 (IPLPSNWLAG…EFIQDTIKRL (74 aa)). Disordered regions lie at residues 32-61 (RSHL…ANMA) and 93-113 (LKRS…QSLA). Disulfide bonds link Cys134–Cys195, Cys161–Cys224, and Cys165–Cys226. N-linked (GlcNAc...) asparagine glycans are attached at residues Asn142 and Asn178.

It belongs to the TGF-beta family. GDNF subfamily. In terms of assembly, homodimer; disulfide-linked. Interacts with GFRA1 coreceptor and RET: forms a 2:2:2 ternary complex composed of GDNF ligand, GFRA1 and RET receptor. In terms of tissue distribution, from stage 22, expressed in somites and the pronephros. At stage 24 and 26, expressed in the pharyngeal arches I-III. At stage 31, expression in the eye, central nervous system and pharyngeal arches IV and V increases. Up to stage 34, expression becomes intense at the oral cavity and lateral line structures. At this stage, expression weakens in the pharyngeal arches, and increases in the epibranchial arches. Expressed in the digestive tract in stage 34 embryos.

It is found in the secreted. Its function is as follows. Neurotrophic factor that enhances survival and morphological differentiation of dopaminergic neurons and increases their high-affinity dopamine uptake. Acts by binding to its coreceptor, GFRA1, leading to autophosphorylation and activation of the RET receptor. This chain is Glial cell line-derived neurotrophic factor, found in Xenopus laevis (African clawed frog).